The sequence spans 486 residues: Cardiolipin synthase A (486 aa).

2 helical membrane passes run 3 to 23 and 38 to 58; these read IFYN…IANI and MSWL…WFFF. PLD phosphodiesterase domains are found at residues 219 to 246 and 399 to 426; these read VDVR…VDPY and QKGL…DMRS. Active-site residues include His-224, Lys-226, Asp-231, His-404, Lys-406, and Asp-411.

This sequence belongs to the phospholipase D family. Cardiolipin synthase subfamily. ClsA sub-subfamily.

It localises to the cell inner membrane. The enzyme catalyses 2 a 1,2-diacyl-sn-glycero-3-phospho-(1'-sn-glycerol) = a cardiolipin + glycerol. Its function is as follows. Catalyzes the reversible phosphatidyl group transfer from one phosphatidylglycerol molecule to another to form cardiolipin (CL) (diphosphatidylglycerol) and glycerol. This Buchnera aphidicola subsp. Acyrthosiphon pisum (strain APS) (Acyrthosiphon pisum symbiotic bacterium) protein is Cardiolipin synthase A.